Here is a 1126-residue protein sequence, read N- to C-terminus: Translation initiation factor IF-2 (1126 aa).

Positions 63–519 (LSINKPSIKK…TTRQRQKRRA (457 aa)) are disordered. Over residues 70–83 (IKKDNFKQNKEDKS) the composition is skewed to basic and acidic residues. Residues 93 to 111 (PLKNNSNKKPLLIKPLNKP) are compositionally biased toward low complexity. Over residues 116–151 (KISNQLQNPNKPNIVNSSQSRANLTNTNSKPSQNFN) the composition is skewed to polar residues. A compositionally biased stretch (pro residues) spans 161-171 (TPPPIKSPAKP). Residues 181-195 (NINNNVKSSESSQNI) are compositionally biased toward polar residues. Composition is skewed to low complexity over residues 211–224 (NTNK…NNRK) and 240–252 (IINP…NKQN). The segment covering 254–264 (AFKQTASNRPG) has biased composition (polar residues). Composition is skewed to low complexity over residues 291-315 (NRQG…GLRN) and 327-349 (NRQG…NRPG). The span at 429–443 (GKTDWDDSAKLEALR) shows a compositional bias: basic and acidic residues. Over residues 501–517 (KQFKKKKKETTRQRQKR) the composition is skewed to basic residues. A tr-type G domain is found at 618 to 790 (RRPPVITVMG…ILLVSDVEDL (173 aa)). Residues 627–634 (GHVDHGKT) are G1. 627 to 634 (GHVDHGKT) serves as a coordination point for GTP. A G2 region spans residues 652–656 (GITQH). A G3 region spans residues 677–680 (DTPG). Residues 677–681 (DTPGH) and 731–734 (NKID) contribute to the GTP site. The G4 stretch occupies residues 731–734 (NKID). Residues 767–769 (SAI) form a G5 region.

It belongs to the TRAFAC class translation factor GTPase superfamily. Classic translation factor GTPase family. IF-2 subfamily.

It is found in the cytoplasm. Its function is as follows. One of the essential components for the initiation of protein synthesis. Protects formylmethionyl-tRNA from spontaneous hydrolysis and promotes its binding to the 30S ribosomal subunits. Also involved in the hydrolysis of GTP during the formation of the 70S ribosomal complex. The sequence is that of Translation initiation factor IF-2 from Prochlorococcus marinus (strain AS9601).